Reading from the N-terminus, the 234-residue chain is Large ribosomal subunit protein uL1 (234 aa).

This sequence belongs to the universal ribosomal protein uL1 family. As to quaternary structure, part of the 50S ribosomal subunit.

Binds directly to 23S rRNA. The L1 stalk is quite mobile in the ribosome, and is involved in E site tRNA release. In terms of biological role, protein L1 is also a translational repressor protein, it controls the translation of the L11 operon by binding to its mRNA. This chain is Large ribosomal subunit protein uL1, found in Klebsiella pneumoniae (strain 342).